A 118-amino-acid polypeptide reads, in one-letter code: Large ribosomal subunit protein uL18 (118 aa).

The interval 1–25 is disordered; sequence MISKPDKNKLRQKRHRRVRGKLSGT. Positions 10-20 are enriched in basic residues; the sequence is LRQKRHRRVRG.

This sequence belongs to the universal ribosomal protein uL18 family. Part of the 50S ribosomal subunit; part of the 5S rRNA/L5/L18/L25 subcomplex. Contacts the 5S and 23S rRNAs.

This is one of the proteins that bind and probably mediate the attachment of the 5S RNA into the large ribosomal subunit, where it forms part of the central protuberance. The sequence is that of Large ribosomal subunit protein uL18 from Streptococcus pneumoniae (strain Hungary19A-6).